The chain runs to 305 residues: uncharacterized protein (305 aa).

The segment at 208 to 236 (SYAQSPAVKKKKWRHSGGKKNNPRENHID) is disordered. Positions 215–225 (VKKKKWRHSGG) are enriched in basic residues.

This is an uncharacterized protein from Bacillus subtilis (strain 168).